We begin with the raw amino-acid sequence, 156 residues long: ATP synthase subunit b (156 aa).

Residues 7–27 traverse the membrane as a helical segment; that stretch reads LIGQLIAFALFVAFCMKFVWP.

The protein belongs to the ATPase B chain family. In terms of assembly, F-type ATPases have 2 components, F(1) - the catalytic core - and F(0) - the membrane proton channel. F(1) has five subunits: alpha(3), beta(3), gamma(1), delta(1), epsilon(1). F(0) has three main subunits: a(1), b(2) and c(10-14). The alpha and beta chains form an alternating ring which encloses part of the gamma chain. F(1) is attached to F(0) by a central stalk formed by the gamma and epsilon chains, while a peripheral stalk is formed by the delta and b chains.

The protein localises to the cell inner membrane. In terms of biological role, f(1)F(0) ATP synthase produces ATP from ADP in the presence of a proton or sodium gradient. F-type ATPases consist of two structural domains, F(1) containing the extramembraneous catalytic core and F(0) containing the membrane proton channel, linked together by a central stalk and a peripheral stalk. During catalysis, ATP synthesis in the catalytic domain of F(1) is coupled via a rotary mechanism of the central stalk subunits to proton translocation. Functionally, component of the F(0) channel, it forms part of the peripheral stalk, linking F(1) to F(0). This Actinobacillus pleuropneumoniae serotype 5b (strain L20) protein is ATP synthase subunit b.